A 539-amino-acid chain; its full sequence is Phosphoenolpyruvate carboxykinase (ATP) (539 aa).

3 residues coordinate substrate: Arg64, Tyr206, and Lys212. ATP contacts are provided by residues Lys212, His231, and 247–255; that span reads GLSGTGKTT. Mn(2+) contacts are provided by Lys212 and His231. Asp268 contributes to the Mn(2+) binding site. ATP is bound by residues Glu296, Arg332, 448-449, and Thr454; that span reads RI. Arg332 is a substrate binding site.

The protein belongs to the phosphoenolpyruvate carboxykinase (ATP) family. In terms of assembly, monomer. The cofactor is Mn(2+).

It is found in the cytoplasm. It catalyses the reaction oxaloacetate + ATP = phosphoenolpyruvate + ADP + CO2. It participates in carbohydrate biosynthesis; gluconeogenesis. Involved in the gluconeogenesis. Catalyzes the conversion of oxaloacetate (OAA) to phosphoenolpyruvate (PEP) through direct phosphoryl transfer between the nucleoside triphosphate and OAA. This is Phosphoenolpyruvate carboxykinase (ATP) from Hamiltonella defensa subsp. Acyrthosiphon pisum (strain 5AT).